The primary structure comprises 360 residues: Peptide chain release factor 1 (360 aa).

At Gln-235 the chain carries N5-methylglutamine.

Belongs to the prokaryotic/mitochondrial release factor family. Methylated by PrmC. Methylation increases the termination efficiency of RF1.

The protein localises to the cytoplasm. Peptide chain release factor 1 directs the termination of translation in response to the peptide chain termination codons UAG and UAA. The chain is Peptide chain release factor 1 from Burkholderia vietnamiensis (strain G4 / LMG 22486) (Burkholderia cepacia (strain R1808)).